We begin with the raw amino-acid sequence, 690 residues long: Protein-glucosylgalactosylhydroxylysine glucosidase (690 aa).

299–300 contributes to the substrate binding site; the sequence is WD. The Proton donor role is filled by Glu429. Residue 497–498 participates in substrate binding; sequence KQ.

The protein belongs to the glycosyl hydrolase 65 family.

It catalyses the reaction (5R)-5-O-[alpha-D-glucosyl-(1-&gt;2)-beta-D-galactosyl]-5-hydroxy-L-lysyl-[collagen] + H2O = (5R)-5-O-(beta-D-galactosyl)-5-hydroxy-L-lysyl-[collagen] + D-glucose. Catalyzes the hydrolysis of glucose from the disaccharide unit linked to hydroxylysine residues of collagen and collagen-like proteins. The protein is Protein-glucosylgalactosylhydroxylysine glucosidase of Mus musculus (Mouse).